Consider the following 176-residue polypeptide: Inner membrane-spanning protein YciB (176 aa).

6 helical membrane-spanning segments follow: residues 3–23 (FLFDLFPIILFFAAFKVWGIF), 24–44 (TATAVAIVATLAQVAWVAFRH), 49–69 (TMLWVSLGVIVVFGGATLVLH), 81–101 (LYWLFAIGLLAARYAFGNNLI), 119–139 (LNVAWALFFAVLGVANLYVVH), and 149–169 (FKLFGTTGAMVVFIILQSLWL).

It belongs to the YciB family.

It localises to the cell inner membrane. Plays a role in cell envelope biogenesis, maintenance of cell envelope integrity and membrane homeostasis. In Burkholderia ambifaria (strain MC40-6), this protein is Inner membrane-spanning protein YciB.